A 962-amino-acid chain; its full sequence is Leucine--tRNA ligase (962 aa).

Residues 41–51 carry the 'HIGH' region motif; sequence PYLNGNLHAGH. The short motif at 631 to 635 is the 'KMSKS' region element; it reads KMSKS. Lys-634 is a binding site for ATP.

Belongs to the class-I aminoacyl-tRNA synthetase family.

It is found in the cytoplasm. It carries out the reaction tRNA(Leu) + L-leucine + ATP = L-leucyl-tRNA(Leu) + AMP + diphosphate. The polypeptide is Leucine--tRNA ligase (Methanococcoides burtonii (strain DSM 6242 / NBRC 107633 / OCM 468 / ACE-M)).